A 170-amino-acid chain; its full sequence is Adenine phosphoribosyltransferase (170 aa).

This sequence belongs to the purine/pyrimidine phosphoribosyltransferase family. Homodimer.

It is found in the cytoplasm. The enzyme catalyses AMP + diphosphate = 5-phospho-alpha-D-ribose 1-diphosphate + adenine. It functions in the pathway purine metabolism; AMP biosynthesis via salvage pathway; AMP from adenine: step 1/1. In terms of biological role, catalyzes a salvage reaction resulting in the formation of AMP, that is energically less costly than de novo synthesis. In Geobacillus kaustophilus (strain HTA426), this protein is Adenine phosphoribosyltransferase.